Reading from the N-terminus, the 297-residue chain is Ribosomal RNA small subunit methyltransferase H (297 aa).

S-adenosyl-L-methionine-binding positions include 35-37 (GGH), Asp-55, Phe-82, Asp-100, and Gln-107.

Belongs to the methyltransferase superfamily. RsmH family.

It localises to the cytoplasm. It carries out the reaction cytidine(1402) in 16S rRNA + S-adenosyl-L-methionine = N(4)-methylcytidine(1402) in 16S rRNA + S-adenosyl-L-homocysteine + H(+). Functionally, specifically methylates the N4 position of cytidine in position 1402 (C1402) of 16S rRNA. In Chlamydia caviae (strain ATCC VR-813 / DSM 19441 / 03DC25 / GPIC) (Chlamydophila caviae), this protein is Ribosomal RNA small subunit methyltransferase H.